Reading from the N-terminus, the 552-residue chain is Threonylcarbamoyladenosine tRNA methylthiotransferase (552 aa).

The tract at residues 31 to 61 (YENKKTVTVRAKKRSQIRLESQEEEEKPKPT) is disordered. The 108-residue stretch at 71–178 (QKVFVKTWGC…VVEVVEETLK (108 aa)) folds into the MTTase N-terminal domain. [4Fe-4S] cluster-binding residues include C80, C115, C144, C221, C225, and C228. One can recognise a Radical SAM core domain in the interval 207-438 (RKNPLIEIIS…DLFYSYEPYA (232 aa)). In terms of domain architecture, TRAM spans 438-500 (ADRVGEIYTV…KFSMVGEILD (63 aa)). Residues 532 to 552 (FGIALVLGSLAFLIQLVVRLL) form a helical membrane-spanning segment.

The protein belongs to the methylthiotransferase family. CDKAL1 subfamily. The cofactor is [4Fe-4S] cluster.

It localises to the membrane. It carries out the reaction N(6)-L-threonylcarbamoyladenosine(37) in tRNA + (sulfur carrier)-SH + AH2 + 2 S-adenosyl-L-methionine = 2-methylsulfanyl-N(6)-L-threonylcarbamoyladenosine(37) in tRNA + (sulfur carrier)-H + 5'-deoxyadenosine + L-methionine + A + S-adenosyl-L-homocysteine + 2 H(+). Its function is as follows. Catalyzes the methylthiolation of N6-threonylcarbamoyladenosine (t(6)A), leading to the formation of 2-methylthio-N6-threonylcarbamoyladenosine (ms(2)t(6)A) at position 37 in tRNAs that read codons beginning with adenine. The chain is Threonylcarbamoyladenosine tRNA methylthiotransferase from Drosophila melanogaster (Fruit fly).